A 1083-amino-acid polypeptide reads, in one-letter code: Carbamoyl phosphate synthase large chain (1083 aa).

Residues 1–402 (MPKRTDIRKV…AYMKALRSME (402 aa)) are carboxyphosphate synthetic domain. Residues R129, R169, G175, G176, E208, V210, E215, G241, V242, H243, Q285, and E299 each coordinate ATP. Residues 133–328 (KAAMQKIGVA…IAKIAAKLAL (196 aa)) form the ATP-grasp 1 domain. Residues Q285, E299, and N301 each contribute to the Mg(2+) site. Mn(2+) is bound by residues Q285, E299, and N301. Residues 403 to 554 (LGRVGLESPE…YSTYEEEDEA (152 aa)) form an oligomerization domain region. The segment at 555–937 (PPTDRQKVLI…AFAKSQLAAG (383 aa)) is carbamoyl phosphate synthetic domain. Residues 679–871 (AALIEKLGLK…MAKIAALCMV (193 aa)) enclose the ATP-grasp 2 domain. Residues R715, R754, L756, E761, G787, V788, H789, S790, Q830, and E842 each contribute to the ATP site. Mg(2+) contacts are provided by Q830, E842, and N844. The Mn(2+) site is built by Q830, E842, and N844. In terms of domain architecture, MGS-like spans 938-1078 (VKLPKSGKVF…QEYLGINAAP (141 aa)). The interval 938 to 1083 (VKLPKSGKVF…INAAPPGTRR (146 aa)) is allosteric domain.

It belongs to the CarB family. As to quaternary structure, composed of two chains; the small (or glutamine) chain promotes the hydrolysis of glutamine to ammonia, which is used by the large (or ammonia) chain to synthesize carbamoyl phosphate. Tetramer of heterodimers (alpha,beta)4. The cofactor is Mg(2+). It depends on Mn(2+) as a cofactor.

It catalyses the reaction hydrogencarbonate + L-glutamine + 2 ATP + H2O = carbamoyl phosphate + L-glutamate + 2 ADP + phosphate + 2 H(+). The catalysed reaction is hydrogencarbonate + NH4(+) + 2 ATP = carbamoyl phosphate + 2 ADP + phosphate + 2 H(+). It participates in amino-acid biosynthesis; L-arginine biosynthesis; carbamoyl phosphate from bicarbonate: step 1/1. The protein operates within pyrimidine metabolism; UMP biosynthesis via de novo pathway; (S)-dihydroorotate from bicarbonate: step 1/3. Its function is as follows. Large subunit of the glutamine-dependent carbamoyl phosphate synthetase (CPSase). CPSase catalyzes the formation of carbamoyl phosphate from the ammonia moiety of glutamine, carbonate, and phosphate donated by ATP, constituting the first step of 2 biosynthetic pathways, one leading to arginine and/or urea and the other to pyrimidine nucleotides. The large subunit (synthetase) binds the substrates ammonia (free or transferred from glutamine from the small subunit), hydrogencarbonate and ATP and carries out an ATP-coupled ligase reaction, activating hydrogencarbonate by forming carboxy phosphate which reacts with ammonia to form carbamoyl phosphate. The protein is Carbamoyl phosphate synthase large chain of Myxococcus xanthus (strain DK1622).